A 234-amino-acid polypeptide reads, in one-letter code: Proteasome subunit alpha type-6 (234 aa).

Residue Ser-14 is modified to Phosphoserine. Lys-191 participates in a covalent cross-link: Glycyl lysine isopeptide (Lys-Gly) (interchain with G-Cter in ubiquitin).

It belongs to the peptidase T1A family. As to quaternary structure, the 26S proteasome consists of a 20S proteasome core and two 19S regulatory subunits. The 20S proteasome core is composed of 28 subunits that are arranged in four stacked rings, resulting in a barrel-shaped structure. The two end rings are each formed by seven alpha subunits, and the two central rings are each formed by seven beta subunits. The catalytic chamber with the active sites is on the inside of the barrel.

The protein resides in the cytoplasm. It is found in the nucleus. Its function is as follows. The proteasome degrades poly-ubiquitinated proteins in the cytoplasm and in the nucleus. It is essential for the regulated turnover of proteins and for the removal of misfolded proteins. The proteasome is a multicatalytic proteinase complex that is characterized by its ability to cleave peptides with Arg, Phe, Tyr, Leu, and Glu adjacent to the leaving group at neutral or slightly basic pH. It has an ATP-dependent proteolytic activity. In Saccharomyces cerevisiae (strain ATCC 204508 / S288c) (Baker's yeast), this protein is Proteasome subunit alpha type-6 (PRE5).